We begin with the raw amino-acid sequence, 122 residues long: Small ribosomal subunit protein uS13 (122 aa).

Residues 93-122 form a disordered region; that stretch reads RKGLPVRGQTTKNNARTRKGKRKTVGSASK. The segment covering 107–116 has biased composition (basic residues); that stretch reads ARTRKGKRKT.

The protein belongs to the universal ribosomal protein uS13 family. In terms of assembly, part of the 30S ribosomal subunit. Forms a loose heterodimer with protein S19. Forms two bridges to the 50S subunit in the 70S ribosome.

Functionally, located at the top of the head of the 30S subunit, it contacts several helices of the 16S rRNA. In the 70S ribosome it contacts the 23S rRNA (bridge B1a) and protein L5 of the 50S subunit (bridge B1b), connecting the 2 subunits; these bridges are implicated in subunit movement. Contacts the tRNAs in the A and P-sites. The chain is Small ribosomal subunit protein uS13 from Wolinella succinogenes (strain ATCC 29543 / DSM 1740 / CCUG 13145 / JCM 31913 / LMG 7466 / NCTC 11488 / FDC 602W) (Vibrio succinogenes).